Consider the following 160-residue polypeptide: Ureidoglycolate lyase (160 aa).

It belongs to the ureidoglycolate lyase family. As to quaternary structure, homodimer. The cofactor is Ni(2+).

The enzyme catalyses (S)-ureidoglycolate = urea + glyoxylate. Its pathway is nitrogen metabolism; (S)-allantoin degradation. Its function is as follows. Catalyzes the catabolism of the allantoin degradation intermediate (S)-ureidoglycolate, generating urea and glyoxylate. Involved in the anaerobic utilization of allantoin as sole nitrogen source. Reinforces the induction of genes involved in the degradation of allantoin and glyoxylate by producing glyoxylate. This chain is Ureidoglycolate lyase, found in Escherichia coli O6:H1 (strain CFT073 / ATCC 700928 / UPEC).